Reading from the N-terminus, the 519-residue chain is Alternative NAD(P)H-ubiquinone oxidoreductase C1, chloroplastic/mitochondrial (519 aa).

The transit peptide at 1-52 (MAVLSSVSSLIPFSYGATRLTSKASLASRTSGFNLSSRWNSTRNSPMLYLSR) directs the protein to the chloroplast and mitochondrion. 82–118 (RVCILGGGFGGLYTALRLESLVWPEDKKPQVVLVDQS) is an FAD binding site. 246–282 (IKVAVVGCGYAGVELAATISERLQDRGIVQSINVSKN) is a binding site for NAD(+).

Belongs to the NADH dehydrogenase family. FAD serves as cofactor. In terms of tissue distribution, flowers, roots, leaves and stems.

The protein resides in the mitochondrion. Its subcellular location is the mitochondrion inner membrane. It is found in the plastid. It localises to the chloroplast. The protein localises to the plastoglobule. It carries out the reaction a quinone + NADH + H(+) = a quinol + NAD(+). It catalyses the reaction a ubiquinone + NADH + H(+) = a ubiquinol + NAD(+). The enzyme catalyses demethylphylloquinone + NADPH + H(+) = demethylphylloquinol + NADP(+). Inhibited by dicumarol. Bifunctional oxidoreductase ables to act both on prenyl naphthoquinones and on prenyl benzoquinones. May serve a respiratory function. Involved in an electron flow toward the plastoglobule plastoquinone pool. Required for plastochromanol-8 accumulation and for phylloquinone (vitamin K1) production. Probably not directly involved in cyclic or chlororespiratory electron flows under standard growth conditions, but participates in the redox metabolism of plastoquinone-9 and the tocophrol recycling-intermediate alpha-tocopherol quinone. Catalyzes the penultimate step in the biosynthesis of vitamin K1. The polypeptide is Alternative NAD(P)H-ubiquinone oxidoreductase C1, chloroplastic/mitochondrial (Arabidopsis thaliana (Mouse-ear cress)).